The following is a 387-amino-acid chain: MSQMERLLERLDYIQEQILTLYEKDSVDLEDHIRLWNLLRRENAIWYVLRQEGHARVGGRAVPAMTVSEANAKFAIEMQIKLESLKASPYAAEGWSLQETTKERYLAEPSRTFKKLGQPVTLMFDNDPENLTEVVLWKWVYYITPTDEWYKARGGIDDTGIYYIDHESVKMYYVRFDMEAENFSETGTVTYRLGSALVNVPEPVTVTDSSSTRERTPKVLRPQGSRRRRNEETGEPVAPAPKRRRGAYGRRSSPKAQRRTAASPVSRGNGGSSDFTSGESDEGHRVRHRALRKKTAGVAPAEGHYLVGAKGPVNSLRCLRYKWKNKYSGDIMYLGTTFTWTESDGTERCGSGRFFCAFSNETKREKFLKSVKIPKNIGLFRAHAEKL.

Positions 1–205 are transactivation domain; the sequence is MSQMERLLER…ALVNVPEPVT (205 aa). Residues 204 to 295 are disordered; that stretch reads VTVTDSSSTR…VRHRALRKKT (92 aa). Basic residues-rich tracts occupy residues 241–258 and 285–295; these read PKRR…KAQR and RVRHRALRKKT. Residues 303–387 are DNA-binding domain; it reads GHYLVGAKGP…GLFRAHAEKL (85 aa). K310 is covalently cross-linked (Glycyl lysine isopeptide (Lys-Gly) (interchain with G-Cter in SUMO)).

This sequence belongs to the papillomaviridae E2 protein family. In terms of assembly, binds DNA as homodimer. Interacts with protein E1; this interaction greatly increases E1 DNA-binding activity. Interacts with protein L1; this interaction enhances E2-dependent replication and transcription activation. Interacts with protein L2; this interaction inhibits E2 transcriptional activity but not DNA replication function E2. Interacts with protein E7; this interaction inhibits E7 oncogenic activity. Interacts with host TAF1; this interaction modulates E2-dependent transcriptional regulation. Interacts with host BRD4; this interaction mediates E2 transcriptional activation function. Additionally, the interaction with host BRD4 on mitotic chromosomes mediates tethering of the viral genome. Interacts with host TOPBP1; this interaction is required for optimal viral DNA replication. Phosphorylated. In terms of processing, sumoylation plays a regulatory role in E2 transcriptional activity.

It localises to the host nucleus. Functionally, plays a role in the initiation of viral DNA replication. A dimer of E2 interacts with a dimer of E1 in order to improve specificity of E1 DNA binding activity. Once the complex recognizes and binds DNA at specific sites, the E2 dimer is removed from DNA. E2 also regulates viral transcription through binding to the E2RE response element (5'-ACCNNNNNNGGT-3') present in multiple copies in the regulatory regions of the viral genome. Activates or represses transcription depending on E2RE's position with regards to proximal promoter elements including the TATA-box. Repression occurs by sterically hindering the assembly of the transcription initiation complex. The chain is Regulatory protein E2 from Human papillomavirus type 41.